The primary structure comprises 229 residues: UPF0173 metal-dependent hydrolase SAOUHSC_01815 (229 aa).

Belongs to the UPF0173 family.

The sequence is that of UPF0173 metal-dependent hydrolase SAOUHSC_01815 from Staphylococcus aureus (strain NCTC 8325 / PS 47).